A 459-amino-acid chain; its full sequence is MQARALLPATLATLATLAVSVLAREPPAAPCPARCDVSRCPSPRCPGGYVPDLCNCCLVCAASEGEPCGRPLDSPCGDSLECVRGVCRCRWTHTVCGTDGHTYADVCALQAASRRALQISGTPVRQLQKGACPSGLHQLTSPRYKFNFIADVVEKIAPAVVHIELFLRHPLFGRNVPLSSGSGFIMSEAGLIVTNAHVVSSSNTASGRQQLKVQLQNGDAYEATIQDIDKKSDIATILIHPNKKLPVLLLGHSADLRPGEFVVAIGSPFALQNTVTTGIVSTAQRDGKELGLRDSDMDYIQTDAIINYGNSGGPLVNLDGEVIGINTLKVAAGISFAIPSDRITRFLSEFQDKHVKDWKKRFIGIRMRTITPSLVEELKTANPDFPAVSSGIYVQEVVPNSPSQRGGIQDGDIIVKVNGRPLVDSSELQEAVLNESSLLLEVRRGNDDLLFSIMPEVVM.

Residues 1–23 form the signal peptide; it reads MQARALLPATLATLATLAVSVLA. The 64-residue stretch at 27-90 folds into the IGFBP N-terminal domain; sequence PAAPCPARCD…ECVRGVCRCR (64 aa). 8 cysteine pairs are disulfide-bonded: C31/C54, C35/C56, C40/C57, C45/C60, C68/C82, C76/C87, C89/C107, and C96/C132. A Kazal-like domain is found at 76-134; that stretch reads CGDSLECVRGVCRCRWTHTVCGTDGHTYADVCALQAASRRALQISGTPVRQLQKGACPS. The serine protease stretch occupies residues 181 to 346; it reads GSGFIMSEAG…AIPSDRITRF (166 aa). Active-site charge relay system residues include H197, D233, and S311. A PDZ domain is found at 365 to 450; the sequence is IRMRTITPSL…EVRRGNDDLL (86 aa).

The protein belongs to the peptidase S1C family. Homotrimer. Interacts with TGFB1; the interaction inhibits TGFB-mediated signaling. Interacts with BMP4; the interaction inhibits BMP4-mediated signaling. Interacts with TGFB2, GDF5 and MYH9. In terms of tissue distribution, expressed in the ovary, essentially in granulosa cells in a follicle-stage specific manner. Highest levels found in large luteinizing granulosa cells.

The protein localises to the secreted. Its function is as follows. Serine protease that cleaves beta-casein/CSN2 as well as several extracellular matrix (ECM) proteoglycans such as decorin/DCN, biglycan/BGN and fibronectin/FN1. Inhibits signaling mediated by TGF-beta family proteins possibly indirectly by degradation of these ECM proteoglycans. May act as a tumor suppressor. Negatively regulates, in vitro, trophoblast invasion during placental development and may be involved in the development of the placenta in vivo. May also have a role in ovarian development, granulosa cell differentiation and luteinization. The chain is Serine protease HTRA3 (Htra3) from Rattus norvegicus (Rat).